A 350-amino-acid chain; its full sequence is tRNA N6-adenosine threonylcarbamoyltransferase (350 aa).

Fe cation contacts are provided by histidine 115 and histidine 119. Residues 137–141 (IISGG), aspartate 170, glycine 183, and asparagine 281 each bind substrate. Fe cation is bound at residue aspartate 309.

This sequence belongs to the KAE1 / TsaD family. It depends on Fe(2+) as a cofactor.

It is found in the cytoplasm. It catalyses the reaction L-threonylcarbamoyladenylate + adenosine(37) in tRNA = N(6)-L-threonylcarbamoyladenosine(37) in tRNA + AMP + H(+). Required for the formation of a threonylcarbamoyl group on adenosine at position 37 (t(6)A37) in tRNAs that read codons beginning with adenine. Is involved in the transfer of the threonylcarbamoyl moiety of threonylcarbamoyl-AMP (TC-AMP) to the N6 group of A37, together with TsaE and TsaB. TsaD likely plays a direct catalytic role in this reaction. The polypeptide is tRNA N6-adenosine threonylcarbamoyltransferase (Ehrlichia canis (strain Jake)).